The sequence spans 461 residues: Anthranilate synthase component 1 (461 aa).

L-tryptophan is bound by residues serine 43 and 238 to 240; that span reads PYM. 273–274 contacts chorismate; the sequence is GT. Glutamate 300 contacts Mg(2+). Residues tyrosine 388, arginine 408, 422–424, and glycine 424 each bind chorismate; that span reads GAG. Glutamate 437 lines the Mg(2+) pocket.

It belongs to the anthranilate synthase component I family. Heterotetramer consisting of two non-identical subunits: a beta subunit (TrpG) and a large alpha subunit (TrpE). It depends on Mg(2+) as a cofactor.

The enzyme catalyses chorismate + L-glutamine = anthranilate + pyruvate + L-glutamate + H(+). It participates in amino-acid biosynthesis; L-tryptophan biosynthesis; L-tryptophan from chorismate: step 1/5. With respect to regulation, feedback inhibited by tryptophan. Functionally, part of a heterotetrameric complex that catalyzes the two-step biosynthesis of anthranilate, an intermediate in the biosynthesis of L-tryptophan. In the first step, the glutamine-binding beta subunit (TrpG) of anthranilate synthase (AS) provides the glutamine amidotransferase activity which generates ammonia as a substrate that, along with chorismate, is used in the second step, catalyzed by the large alpha subunit of AS (TrpE) to produce anthranilate. In the absence of TrpG, TrpE can synthesize anthranilate directly from chorismate and high concentrations of ammonia. The sequence is that of Anthranilate synthase component 1 (trpE) from Methanothermobacter marburgensis (strain ATCC BAA-927 / DSM 2133 / JCM 14651 / NBRC 100331 / OCM 82 / Marburg) (Methanobacterium thermoautotrophicum).